We begin with the raw amino-acid sequence, 696 residues long: UvrABC system protein C (696 aa).

Residues T16 to V95 form the GIY-YIG domain. The UVR domain maps to D208–V243.

Belongs to the UvrC family. As to quaternary structure, interacts with UvrB in an incision complex.

It localises to the cytoplasm. Its function is as follows. The UvrABC repair system catalyzes the recognition and processing of DNA lesions. UvrC both incises the 5' and 3' sides of the lesion. The N-terminal half is responsible for the 3' incision and the C-terminal half is responsible for the 5' incision. This is UvrABC system protein C from Corynebacterium glutamicum (strain ATCC 13032 / DSM 20300 / JCM 1318 / BCRC 11384 / CCUG 27702 / LMG 3730 / NBRC 12168 / NCIMB 10025 / NRRL B-2784 / 534).